The chain runs to 186 residues: NADH-quinone oxidoreductase subunit B (186 aa).

Residues Cys-44, Cys-45, Cys-110, and Cys-139 each coordinate [4Fe-4S] cluster.

Belongs to the complex I 20 kDa subunit family. NDH-1 is composed of 14 different subunits. Subunits NuoB, C, D, E, F, and G constitute the peripheral sector of the complex. The cofactor is [4Fe-4S] cluster.

The protein resides in the cell inner membrane. The enzyme catalyses a quinone + NADH + 5 H(+)(in) = a quinol + NAD(+) + 4 H(+)(out). NDH-1 shuttles electrons from NADH, via FMN and iron-sulfur (Fe-S) centers, to quinones in the respiratory chain. The immediate electron acceptor for the enzyme in this species is believed to be ubiquinone. Couples the redox reaction to proton translocation (for every two electrons transferred, four hydrogen ions are translocated across the cytoplasmic membrane), and thus conserves the redox energy in a proton gradient. This is NADH-quinone oxidoreductase subunit B from Leptospira biflexa serovar Patoc (strain Patoc 1 / Ames).